The following is a 182-amino-acid chain: Adenine phosphoribosyltransferase (182 aa).

The protein belongs to the purine/pyrimidine phosphoribosyltransferase family. As to quaternary structure, homodimer.

It localises to the cytoplasm. It catalyses the reaction AMP + diphosphate = 5-phospho-alpha-D-ribose 1-diphosphate + adenine. It functions in the pathway purine metabolism; AMP biosynthesis via salvage pathway; AMP from adenine: step 1/1. In terms of biological role, catalyzes a salvage reaction resulting in the formation of AMP, that is energically less costly than de novo synthesis. In Pseudomonas syringae pv. tomato (strain ATCC BAA-871 / DC3000), this protein is Adenine phosphoribosyltransferase.